Reading from the N-terminus, the 264-residue chain is Intermembrane phospholipid transport system ATP-binding protein MlaF (264 aa).

The ABC transporter domain maps to 6–242 (IEVKNLTFKR…QDLRVVQFLK (237 aa)). 38–45 (GPSGIGKT) contacts ATP.

The protein belongs to the ABC transporter superfamily. MlaF family. As to quaternary structure, the complex is composed of two ATP-binding proteins (MlaF), two transmembrane proteins (MlaE), two cytoplasmic solute-binding proteins (MlaB) and six periplasmic solute-binding proteins (MlaD).

It is found in the cell inner membrane. Part of the ABC transporter complex MlaFEDB, which is involved in a phospholipid transport pathway that maintains lipid asymmetry in the outer membrane by retrograde trafficking of phospholipids from the outer membrane to the inner membrane. Responsible for energy coupling to the transport system. This is Intermembrane phospholipid transport system ATP-binding protein MlaF from Haemophilus influenzae (strain ATCC 51907 / DSM 11121 / KW20 / Rd).